A 190-amino-acid chain; its full sequence is Ribose 1,5-bisphosphate phosphokinase PhnN (190 aa).

The segment at 135–159 (RGREPEPGIGQRLARPDPAPGHQAD) is disordered.

This sequence belongs to the ribose 1,5-bisphosphokinase family.

It catalyses the reaction alpha-D-ribose 1,5-bisphosphate + ATP = 5-phospho-alpha-D-ribose 1-diphosphate + ADP. It participates in metabolic intermediate biosynthesis; 5-phospho-alpha-D-ribose 1-diphosphate biosynthesis; 5-phospho-alpha-D-ribose 1-diphosphate from D-ribose 5-phosphate (route II): step 3/3. Its function is as follows. Catalyzes the phosphorylation of ribose 1,5-bisphosphate to 5-phospho-D-ribosyl alpha-1-diphosphate (PRPP). This is Ribose 1,5-bisphosphate phosphokinase PhnN from Pseudofrankia inefficax (strain DSM 45817 / CECT 9037 / DDB 130130 / EuI1c) (Frankia inefficax).